The sequence spans 294 residues: 4-hydroxy-tetrahydrodipicolinate synthase (294 aa).

Position 47 (Thr47) interacts with pyruvate. Residue Tyr135 is the Proton donor/acceptor of the active site. The active-site Schiff-base intermediate with substrate is Lys163. Thr205 is a binding site for pyruvate.

Belongs to the DapA family. In terms of assembly, homotetramer; dimer of dimers.

The protein resides in the cytoplasm. The enzyme catalyses L-aspartate 4-semialdehyde + pyruvate = (2S,4S)-4-hydroxy-2,3,4,5-tetrahydrodipicolinate + H2O + H(+). Its pathway is amino-acid biosynthesis; L-lysine biosynthesis via DAP pathway; (S)-tetrahydrodipicolinate from L-aspartate: step 3/4. Catalyzes the condensation of (S)-aspartate-beta-semialdehyde [(S)-ASA] and pyruvate to 4-hydroxy-tetrahydrodipicolinate (HTPA). The protein is 4-hydroxy-tetrahydrodipicolinate synthase of Rickettsia africae (strain ESF-5).